We begin with the raw amino-acid sequence, 313 residues long: 2-phosphoglycerate kinase (313 aa).

The ATP-cone domain occupies 8–95 (SRILVTDKEY…LWRRVLKKHS (88 aa)).

The protein belongs to the 2-phosphoglycerate kinase family. It depends on a divalent metal cation as a cofactor.

The catalysed reaction is (2R)-2-phosphoglycerate + ATP = (2R)-2,3-bisphosphoglycerate + ADP + H(+). It participates in thermoadapter biosynthesis; cyclic 2,3-diphosphoglycerate biosynthesis; cyclic 2,3-diphosphoglycerate from 2-phospho-D-glycerate: step 1/2. Catalyzes the phosphorylation of 2-phosphoglycerate to 2,3-diphosphoglycerate. Involved in the biosynthesis of cyclic 2,3-bisphosphoglycerate, a thermoprotectant. This Methanococcus maripaludis (strain C6 / ATCC BAA-1332) protein is 2-phosphoglycerate kinase.